The primary structure comprises 108 residues: DNA-binding protein HBbu (108 aa).

The protein belongs to the bacterial histone-like protein family.

Functionally, histone-like DNA-binding protein which is capable of wrapping DNA to stabilize it, and thus to prevent its denaturation under extreme environmental conditions. The protein is DNA-binding protein HBbu (hbb) of Borrelia garinii subsp. bavariensis (strain ATCC BAA-2496 / DSM 23469 / PBi) (Borreliella bavariensis).